We begin with the raw amino-acid sequence, 217 residues long: uncharacterized protein (217 aa).

In terms of domain architecture, ABC transporter spans 2–216; it reads LCVKNVSLRL…AQWSENYNKL (215 aa). 34–41 lines the ATP pocket; sequence GPSGCGKS.

This sequence belongs to the ABC transporter superfamily.

In terms of biological role, probably part of a binding-protein-dependent transport system YnjCD. Probably responsible for energy coupling to the transport system. This is an uncharacterized protein from Escherichia coli (strain K12).